The chain runs to 583 residues: Threonine--tRNA ligase (583 aa).

The interval 185 to 478 (DHRKLGRELD…LVEHYGGAFP (294 aa)) is catalytic. Zn(2+)-binding residues include cysteine 278, histidine 329, and histidine 455.

The protein belongs to the class-II aminoacyl-tRNA synthetase family. As to quaternary structure, homodimer. It depends on Zn(2+) as a cofactor.

The protein localises to the cytoplasm. The catalysed reaction is tRNA(Thr) + L-threonine + ATP = L-threonyl-tRNA(Thr) + AMP + diphosphate + H(+). Its function is as follows. Catalyzes the attachment of threonine to tRNA(Thr) in a two-step reaction: L-threonine is first activated by ATP to form Thr-AMP and then transferred to the acceptor end of tRNA(Thr). Also edits incorrectly charged L-seryl-tRNA(Thr). In Borrelia hermsii (strain HS1 / DAH), this protein is Threonine--tRNA ligase.